The chain runs to 437 residues: Histidine--tRNA ligase (437 aa).

Belongs to the class-II aminoacyl-tRNA synthetase family. As to quaternary structure, homodimer.

The protein resides in the cytoplasm. It carries out the reaction tRNA(His) + L-histidine + ATP = L-histidyl-tRNA(His) + AMP + diphosphate + H(+). This is Histidine--tRNA ligase from Opitutus terrae (strain DSM 11246 / JCM 15787 / PB90-1).